Reading from the N-terminus, the 95-residue chain is MLKMNLQFFAHKKGVGSTKNGRDSESKRLGAKRADGQFVLAGNILYRQRGTKIHPGVNVGRGGDDTLFALVDGVLKFERKGRDKKQASVYPVEAK.

Positions 1–9 (MLKMNLQFF) are excised as a propeptide.

It belongs to the bacterial ribosomal protein bL27 family. The N-terminus is cleaved by ribosomal processing cysteine protease Prp.

The sequence is that of Large ribosomal subunit protein bL27 from Lachnoclostridium phytofermentans (strain ATCC 700394 / DSM 18823 / ISDg) (Clostridium phytofermentans).